We begin with the raw amino-acid sequence, 1083 residues long: Probable arabinosyltransferase B (1083 aa).

The next 13 helical transmembrane spans lie at 23–45 (VARWVAAIAGLIGFVSSVVTPLL), 222–239 (FAMMLAIITTVGALVALW), 252–274 (LIPARWSMFTLVDVAVIFGFLLW), 331–350 (SMWIRLPDLICGVACWLLLS), 357–379 (LGPAIVGFKPALWAAGLVLLAAW), 421–443 (TAAFTIGIQPTGLIAVAALLAGG), 456–478 (AVGAWPLVAPLLAAGTVVLTVVF), 525–542 (FGFLITALCLFTAVLITL), 555–572 (AWRLIGTILGTMFFLTFA), 576–598 (WVHHFGLFAALGAAVAALTTVLV), 611–633 (AFLAALLFVMTLCFATTNGWWYV), 648–670 (DGITFSTIFFILFAIVALYAYYL), and 690–712 (FWAPIPFAAGLMTLVFIGSMVAG).

This sequence belongs to the emb family.

Its subcellular location is the cell membrane. Arabinosyl transferase responsible for the polymerization of arabinose into the arabinan of arabinogalactan. This Mycobacterium leprae (strain TN) protein is Probable arabinosyltransferase B (embB).